The chain runs to 341 residues: MSGVGCILGIETSCDETAVAVLNQRSVLSHEVLSQKEHSSFGGVVPEIAARAHSDFLHVLVSKAMGGAHIGFSDLSAIAVTSGPGLVGSLIVGVMLAKAIAYVAHKPIIAVNHLEAHALVARMIYADLEFPFLVLIISGGHCQFLIAHDVGRYTKLGESVDDSLGESFDKVARMLGLGYPGGPEVESCALKGDAHRFPFPRALKSRPGCNFSFSGLKTAVRYTIAKEGKLDNQALYDICASFQQCVGEILVSRIANAMAAAKSADSSISKMVVSGGVAANNFLRGSIRKCANELGFDAIFPPQELCTDNGIMVGWAGLENLRKGNFSSLELIPRARWPLCP.

Residues H113 and H117 each contribute to the Fe cation site. Residues I136–G140, D169, G182, and N280 contribute to the substrate site. Residue D308 participates in Fe cation binding.

This sequence belongs to the KAE1 / TsaD family. Requires Fe(2+) as cofactor.

It is found in the cytoplasm. The catalysed reaction is L-threonylcarbamoyladenylate + adenosine(37) in tRNA = N(6)-L-threonylcarbamoyladenosine(37) in tRNA + AMP + H(+). Its function is as follows. Required for the formation of a threonylcarbamoyl group on adenosine at position 37 (t(6)A37) in tRNAs that read codons beginning with adenine. Is involved in the transfer of the threonylcarbamoyl moiety of threonylcarbamoyl-AMP (TC-AMP) to the N6 group of A37, together with TsaE and TsaB. TsaD likely plays a direct catalytic role in this reaction. This Anaplasma marginale (strain St. Maries) protein is tRNA N6-adenosine threonylcarbamoyltransferase.